A 231-amino-acid chain; its full sequence is Octanoyltransferase (231 aa).

The BPL/LPL catalytic domain maps to 49–224 (ADTPDEIWLL…ALQRLLPPVY (176 aa)). Residues 88–95 (RGGQITYH), 155–157 (ALG), and 168–170 (GLA) contribute to the substrate site. Catalysis depends on C186, which acts as the Acyl-thioester intermediate.

This sequence belongs to the LipB family.

The protein localises to the cytoplasm. It carries out the reaction octanoyl-[ACP] + L-lysyl-[protein] = N(6)-octanoyl-L-lysyl-[protein] + holo-[ACP] + H(+). It functions in the pathway protein modification; protein lipoylation via endogenous pathway; protein N(6)-(lipoyl)lysine from octanoyl-[acyl-carrier-protein]: step 1/2. Catalyzes the transfer of endogenously produced octanoic acid from octanoyl-acyl-carrier-protein onto the lipoyl domains of lipoate-dependent enzymes. Lipoyl-ACP can also act as a substrate although octanoyl-ACP is likely to be the physiological substrate. In Aromatoleum aromaticum (strain DSM 19018 / LMG 30748 / EbN1) (Azoarcus sp. (strain EbN1)), this protein is Octanoyltransferase.